The chain runs to 222 residues: MEVKGKETASVLCLSKYVDLSSEESHRYYLARRNGLQMLRDRGYEVSDEDINLSLHDFRTVYGERPDVDRLRISALHRSDSTKKVKIVFFGTSMVKVNAIRSVVADILSQETITGLILVLQNHVTNQALKAIELFSFKVEIFQITDLLVNITKHSLKPQHQVLNDEEKTTLLKKFSIEEKQLPRISKKDAIVRYYGLEKGQVVKVNYRGELTESHVAFRCVW.

It belongs to the archaeal Rpo5/eukaryotic RPB5 RNA polymerase subunit family. Component of the RNA polymerase V complex. As to expression, expressed in roots, leaves, siliques and seeds, and to a lower level, in flower buds and flowers.

Its subcellular location is the nucleus. In terms of biological role, DNA-dependent RNA polymerase catalyzes the transcription of DNA into RNA using the four ribonucleoside triphosphates as substrates. Component of RNA polymerase V involved in RNA-directed DNA methylation-dependent (RdDM) silencing of endogenous repeated sequences, including transposable elements. Required for establishment of DNA methylation. The chain is DNA-directed RNA polymerase V subunit 5A (NRPE5A) from Arabidopsis thaliana (Mouse-ear cress).